The sequence spans 316 residues: MARRRKGRPIDGVILLDKPTGITSNDTLQKVKRIFFAQKAGHTGALDPLATGMLPICFGEATKFSQFLLDSDKRYRVIAKLGERTNTSDSDGEVVETREVKVDRGQLERCIAKFRGTTDQIPSMFSALKYQGRPLYEYAREGIEIPRESRKITVHSIELLRFEGHEVEMEVHCSKGTYIRTITDDLGEMLGCGAHVVYLRRTGVSDYPMENVVTLEQLQALRDQAIEQGIEPGELLDPLLLPTDSAVQDLPEANVTVEGGDAILHGQPVKASQLPEQGTLVRITVGEQRDFIGIGEIDQNNMVAPKRVMANKQDEA.

Catalysis depends on Asp47, which acts as the Nucleophile.

This sequence belongs to the pseudouridine synthase TruB family. Type 1 subfamily.

It catalyses the reaction uridine(55) in tRNA = pseudouridine(55) in tRNA. Its function is as follows. Responsible for synthesis of pseudouridine from uracil-55 in the psi GC loop of transfer RNAs. This is tRNA pseudouridine synthase B from Photobacterium profundum (strain SS9).